Here is a 332-residue protein sequence, read N- to C-terminus: Glycerol-3-phosphate dehydrogenase [NAD(P)+] (332 aa).

The NADPH site is built by W11, R30, and K108. Residues K108, G137, and S139 each contribute to the sn-glycerol 3-phosphate site. A141 is a binding site for NADPH. Sn-glycerol 3-phosphate contacts are provided by K192, D245, S255, R256, and N257. The active-site Proton acceptor is K192. R256 serves as a coordination point for NADPH. NADPH is bound by residues V280 and E282.

Belongs to the NAD-dependent glycerol-3-phosphate dehydrogenase family.

The protein resides in the cytoplasm. It carries out the reaction sn-glycerol 3-phosphate + NAD(+) = dihydroxyacetone phosphate + NADH + H(+). The catalysed reaction is sn-glycerol 3-phosphate + NADP(+) = dihydroxyacetone phosphate + NADPH + H(+). It participates in membrane lipid metabolism; glycerophospholipid metabolism. Its function is as follows. Catalyzes the reduction of the glycolytic intermediate dihydroxyacetone phosphate (DHAP) to sn-glycerol 3-phosphate (G3P), the key precursor for phospholipid synthesis. The sequence is that of Glycerol-3-phosphate dehydrogenase [NAD(P)+] from Burkholderia multivorans (strain ATCC 17616 / 249).